Reading from the N-terminus, the 87-residue chain is Large ribosomal subunit protein bL27 (87 aa).

The disordered stretch occupies residues 1–21 (MAHKKAGGSSRNGRDSESKRL).

The protein belongs to the bacterial ribosomal protein bL27 family.

In Aromatoleum aromaticum (strain DSM 19018 / LMG 30748 / EbN1) (Azoarcus sp. (strain EbN1)), this protein is Large ribosomal subunit protein bL27.